The following is a 423-amino-acid chain: G protein-activated inward rectifier potassium channel 2 (423 aa).

The Cytoplasmic portion of the chain corresponds to 1–89; the sequence is MAKLTESMTN…IFTTLVDLKW (89 aa). Serine 16 and serine 23 each carry phosphoserine. The helical transmembrane segment at 90-114 threads the bilayer; the sequence is RFNLLIFVMVYTVTWLFFGMIWWLI. Residues 115–138 lie on the Extracellular side of the membrane; that stretch reads AYIRGDMDHIEDPSWTPCVTNLNG. The helical; Pore-forming intramembrane region spans 139-150; that stretch reads FVSAFLFSIETE. Residues 151-157 constitute an intramembrane region (pore-forming); it reads TTIGYGY. A Selectivity filter motif is present at residues 152-157; the sequence is TIGYGY. Over 158–166 the chain is Extracellular; sequence RVITDKCPE. Residues 167-188 traverse the membrane as a helical segment; that stretch reads GIILLLIQSVLGSIVNAFMVGC. Over 189 to 423 the chain is Cytoplasmic; the sequence is MFVKISQPKK…VANLENESKV (235 aa). The disordered stretch occupies residues 390–423; that stretch reads NQHAELETEEEEKNLEEQTERNGDVANLENESKV. Positions 420–423 match the PDZ-binding motif; it reads ESKV.

Belongs to the inward rectifier-type potassium channel (TC 1.A.2.1) family. KCNJ6 subfamily. In terms of assembly, associates with KCNJ3/GIRK1 or KCNJ5/GRIK4 to form a G-protein-activated heteromultimer pore-forming unit. The resulting inward current is much larger. Interacts (via PDZ-binding motif) with SNX27 (via PDZ domain); the interaction is required when endocytosed to prevent degradation in lysosomes and promote recycling to the plasma membrane. In terms of tissue distribution, most abundant in cerebellum, and to a lesser degree in islets and exocrine pancreas.

It localises to the membrane. The catalysed reaction is K(+)(in) = K(+)(out). With respect to regulation, activated by phosphatidylinositol 4,5 biphosphate (PtdIns(4,5)P2). Functionally, inward rectifier potassium channels are characterized by a greater tendency to allow potassium to flow into the cell rather than out of it. Their voltage dependence is regulated by the concentration of extracellular potassium; as external potassium is raised, the voltage range of the channel opening shifts to more positive voltages. The inward rectification is mainly due to the blockage of outward current by internal magnesium. This potassium channel may be involved in the regulation of insulin secretion by glucose and/or neurotransmitters acting through G-protein-coupled receptors. The protein is G protein-activated inward rectifier potassium channel 2 (KCNJ6) of Homo sapiens (Human).